We begin with the raw amino-acid sequence, 357 residues long: Peptide chain release factor 1 (357 aa).

Q232 carries the N5-methylglutamine modification. Over residues 284–304 the composition is skewed to basic and acidic residues; sequence AERAAERKGQIGSGDRSERIR. Positions 284–308 are disordered; that stretch reads AERAAERKGQIGSGDRSERIRTYNY.

Belongs to the prokaryotic/mitochondrial release factor family. Methylated by PrmC. Methylation increases the termination efficiency of RF1.

It localises to the cytoplasm. Functionally, peptide chain release factor 1 directs the termination of translation in response to the peptide chain termination codons UAG and UAA. The chain is Peptide chain release factor 1 from Maricaulis maris (strain MCS10) (Caulobacter maris).